We begin with the raw amino-acid sequence, 436 residues long: uncharacterized protein (436 aa).

The first 18 residues, 1 to 18 (MMKRFVALSMAIFSLSFA), serve as a signal peptide directing secretion.

This is an uncharacterized protein from Aquifex aeolicus (strain VF5).